Consider the following 141-residue polypeptide: MAKKVANVVKLQIPAGKATPAPPVGPALGQAGINIMGFTKEFNARTADQAGMIIPVVISVYEDRSFDFITKTPPAATLLKKAAGVEHGSGEPNTNKVATVTKDQVKQIAETKMQDLNAADVEAAMRMIEGTARSMGFTVEG.

Belongs to the universal ribosomal protein uL11 family. As to quaternary structure, part of the ribosomal stalk of the 50S ribosomal subunit. Interacts with L10 and the large rRNA to form the base of the stalk. L10 forms an elongated spine to which L12 dimers bind in a sequential fashion forming a multimeric L10(L12)X complex. Post-translationally, one or more lysine residues are methylated.

Forms part of the ribosomal stalk which helps the ribosome interact with GTP-bound translation factors. The chain is Large ribosomal subunit protein uL11 from Levilactobacillus brevis (strain ATCC 367 / BCRC 12310 / CIP 105137 / JCM 1170 / LMG 11437 / NCIMB 947 / NCTC 947) (Lactobacillus brevis).